We begin with the raw amino-acid sequence, 349 residues long: Phenylalanine--tRNA ligase alpha subunit (349 aa).

Position 259 (E259) interacts with Mg(2+).

This sequence belongs to the class-II aminoacyl-tRNA synthetase family. Phe-tRNA synthetase alpha subunit type 1 subfamily. As to quaternary structure, tetramer of two alpha and two beta subunits. It depends on Mg(2+) as a cofactor.

It is found in the cytoplasm. The catalysed reaction is tRNA(Phe) + L-phenylalanine + ATP = L-phenylalanyl-tRNA(Phe) + AMP + diphosphate + H(+). In Lactobacillus delbrueckii subsp. bulgaricus (strain ATCC 11842 / DSM 20081 / BCRC 10696 / JCM 1002 / NBRC 13953 / NCIMB 11778 / NCTC 12712 / WDCM 00102 / Lb 14), this protein is Phenylalanine--tRNA ligase alpha subunit.